Reading from the N-terminus, the 196-residue chain is DnaA initiator-associating protein DiaA (196 aa).

Residues 34–196 (LVQSLLNGNK…DNTLFPHQDD (163 aa)) enclose the SIS domain.

Belongs to the SIS family. DiaA subfamily. In terms of assembly, homotetramer; dimer of dimers.

Required for the timely initiation of chromosomal replication via direct interactions with the DnaA initiator protein. In Yersinia enterocolitica serotype O:8 / biotype 1B (strain NCTC 13174 / 8081), this protein is DnaA initiator-associating protein DiaA.